Here is a 472-residue protein sequence, read N- to C-terminus: MLHAMRPVLLVAALLAVTAHAFLGFGSGSTHKDDAEWGHYHNQAQLEAKLGEINEKCPEITTLYEIGQSVEGRPLVVIQFSTTPGEHIPTKPEVKLIGNMHGNEPIGRELLLRFAETLCNGAINNDKEIVQLLNSTSIHILPSMNPDGFELALGTEPAQRQWLTGRSNINGVDLNRDFPDLDSIFYELQKIGVPKFDHLLSLFEDNVDRQPETIAVGQWTLSLPFVLSANFHEGDLVANYPFDAAIDENSQKTAYSASPDDGTFRWLAKSYADNHAHMSKNDHAPCDGTSQDAFARQGGITNGAKWYSVAGGMQDFNYLATNAMEITLELSCEKMPEGSQLPRFWEDNQKSIFEYVWKSHSGVKGMVVDAMTGEPIKRAVVWIRNGTETVPVKHPVTTWSEGDFYRVLPAGKYEIIVAAEGYDIAAKNVTVENKVRDSALVVNFALSPAADEPSENEQEQIAELVNEIARRR.

An N-terminal signal peptide occupies residues 1–21 (MLHAMRPVLLVAALLAVTAHA). The region spanning 39–359 (HYHNQAQLEA…KSIFEYVWKS (321 aa)) is the Peptidase M14 domain. Zn(2+)-binding residues include His-101 and Glu-104. The N-linked (GlcNAc...) asparagine glycan is linked to Asn-134. Position 232 (His-232) interacts with Zn(2+). Residue Glu-329 is the Proton donor/acceptor of the active site. Asn-385 and Asn-428 each carry an N-linked (GlcNAc...) asparagine glycan.

It belongs to the peptidase M14 family. Zn(2+) serves as cofactor. Expression is restricted to the nervous system.

It is found in the cell projection. The protein resides in the axon. The protein localises to the perikaryon. Its subcellular location is the cytoplasmic vesicle. It localises to the secretory vesicle lumen. The enzyme catalyses Release of C-terminal arginine or lysine residues from polypeptides.. In terms of biological role, during FMRFamide-like peptide (FaRPs or FLP) and neuropeptide-like protein (NLP) precursor processing, catalyzes the removal of Arg or Lys residues from the C-terminus following the initial endoprotease cleavage. By processing neuropeptides, modulates basal acetylcholine release at the ventral cord neuromuscular junctions. Involved in egg-laying, defecation and locomotion. By processing FLP neuropeptides, regulates the turning step of male mating behavior. Involved in reducing pharyngeal pumping in response to high CO(2) levels. In Caenorhabditis elegans, this protein is Carboxypeptidase E.